Here is a 538-residue protein sequence, read N- to C-terminus: Cytochrome P450 52-M1 (538 aa).

Residues 18–38 (GLLPLLFVAFLVLHEPIWLLW) traverse the membrane as a helical segment. Cys484 provides a ligand contact to heme.

It belongs to the cytochrome P450 family. It depends on heme as a cofactor.

It is found in the membrane. It carries out the reaction an omega-methyl-long-chain fatty acid + reduced [NADPH--hemoprotein reductase] + O2 = an omega-hydroxy-long-chain fatty acid + oxidized [NADPH--hemoprotein reductase] + H2O + H(+). It catalyses the reaction an (omega-1)-ethyl fatty acid + reduced [NADPH--hemoprotein reductase] + O2 = an (omega-1)-hydroxy-long-chain fatty acid + oxidized [NADPH--hemoprotein reductase] + H2O + H(+). The enzyme catalyses (9Z)-octadecenoate + reduced [NADPH--hemoprotein reductase] + O2 = 18-hydroxy-(9Z)-octadecenoate + oxidized [NADPH--hemoprotein reductase] + H2O + H(+). The catalysed reaction is (9Z)-octadecenoate + reduced [NADPH--hemoprotein reductase] + O2 = 17-hydroxy-(9Z)-octadecenoate + oxidized [NADPH--hemoprotein reductase] + H2O + H(+). It carries out the reaction (9Z,12Z)-octadecadienoate + reduced [NADPH--hemoprotein reductase] + O2 = 18-hydroxy-(9Z,12Z)-octadecadienoate + oxidized [NADPH--hemoprotein reductase] + H2O + H(+). It catalyses the reaction (9Z,12Z)-octadecadienoate + reduced [NADPH--hemoprotein reductase] + O2 = 17-hydroxy-(9Z,12Z)-octadecadienoate + oxidized [NADPH--hemoprotein reductase] + H2O + H(+). The enzyme catalyses hexadecanoate + reduced [NADPH--hemoprotein reductase] + O2 = 16-hydroxyhexadecanoate + oxidized [NADPH--hemoprotein reductase] + H2O + H(+). The catalysed reaction is (9Z)-hexadecenoate + reduced [NADPH--hemoprotein reductase] + O2 = (9Z)-16-hydroxyhexadec-9-enoate + oxidized [NADPH--hemoprotein reductase] + H2O + H(+). It carries out the reaction octadecanoate + reduced [NADPH--hemoprotein reductase] + O2 = 18-hydroxyoctadecanoate + oxidized [NADPH--hemoprotein reductase] + H2O + H(+). Its function is as follows. Catalyzes the first step of sophorolipid biosynthesis. Catalyzes the terminal (at the omega-position) or subterminal (at the omega(-1)-position) hydroxylation of a fatty acid. This converts the fatty acid to a substrate for the subsequent glycosyltransferase reactions. Oleic acid is the preferred substrate, but it acts on various other C-16, C-18 and C-20 saturated and unsaturated fatty acids, namely palmitic, palmitoleic, stearic, linoleic, cis-9,10-epoxystearic, trans-9,10-epoxystearic and arachidonic acid. In Starmerella bombicola (Yeast), this protein is Cytochrome P450 52-M1.